Here is a 147-residue protein sequence, read N- to C-terminus: MALQRTHSLLLLLLLTLLGLGLVQPSYGQDGMYQRFLRQHVHPEETGGSDRYCNLMMQRRKMTLYHCKRFNTFIHEDIWNIRSICSTTNIQCKNGKMNCHEGVVKVTDCRDTGSSRAPNCRYRAIASTRRVVIACEGNPQVPVHFDG.

The first 28 residues, Met-1–Gly-28, serve as a signal peptide directing secretion. Pyrrolidone carboxylic acid is present on Gln-29. Residues Arg-35, His-40, Lys-68, Asn-71, and Thr-72 each coordinate dUMP. His-40 serves as the catalytic Proton acceptor. Intrachain disulfides connect Cys-53–Cys-109, Cys-67–Cys-120, Cys-85–Cys-135, and Cys-92–Cys-99. Catalysis depends on His-144, which acts as the Proton donor. DUMP is bound at residue Phe-145.

The protein belongs to the pancreatic ribonuclease family. In terms of tissue distribution, expressed in the cortical and medullary tubules of the kidney, and in the transitional epithelium of the urinary bladder (at protein level).

Its subcellular location is the secreted. Functionally, cleaves preferentially after uridine bases. Has antimicrobial activity against uropathogenic E.coli (UPEC). Probably contributes to urinary tract sterility. The protein is Ribonuclease 4 (RNASE4) of Homo sapiens (Human).